The sequence spans 532 residues: Phosphoribosylamine--glycine ligase, chloroplastic (532 aa).

The N-terminal 75 residues, 1-75, are a transit peptide targeting the chloroplast; the sequence is MSSLCASNCY…IQRRLFLLRC (75 aa). Residues 204–412 enclose the ATP-grasp domain; the sequence is KNLCHKYNIP…LAKVLLAACK (209 aa).

It belongs to the GARS family.

The protein resides in the plastid. It is found in the chloroplast. It carries out the reaction 5-phospho-beta-D-ribosylamine + glycine + ATP = N(1)-(5-phospho-beta-D-ribosyl)glycinamide + ADP + phosphate + H(+). Its pathway is purine metabolism; IMP biosynthesis via de novo pathway; N(1)-(5-phospho-D-ribosyl)glycinamide from 5-phospho-alpha-D-ribose 1-diphosphate: step 2/2. The sequence is that of Phosphoribosylamine--glycine ligase, chloroplastic (PUR2) from Arabidopsis thaliana (Mouse-ear cress).